The chain runs to 508 residues: Flagellin (508 aa).

This sequence belongs to the bacterial flagellin family.

It is found in the secreted. The protein resides in the bacterial flagellum. Its function is as follows. Flagellin is the subunit protein which polymerizes to form the filaments of bacterial flagella. In Salmonella berta, this protein is Flagellin (fliC).